Here is a 185-residue protein sequence, read N- to C-terminus: Ribosome-recycling factor (185 aa).

Belongs to the RRF family.

The protein resides in the cytoplasm. Functionally, responsible for the release of ribosomes from messenger RNA at the termination of protein biosynthesis. May increase the efficiency of translation by recycling ribosomes from one round of translation to another. The sequence is that of Ribosome-recycling factor from Shewanella baltica (strain OS185).